A 118-amino-acid polypeptide reads, in one-letter code: Putative pterin-4-alpha-carbinolamine dehydratase (118 aa).

This sequence belongs to the pterin-4-alpha-carbinolamine dehydratase family.

It catalyses the reaction (4aS,6R)-4a-hydroxy-L-erythro-5,6,7,8-tetrahydrobiopterin = (6R)-L-erythro-6,7-dihydrobiopterin + H2O. The sequence is that of Putative pterin-4-alpha-carbinolamine dehydratase from Xanthomonas euvesicatoria pv. vesicatoria (strain 85-10) (Xanthomonas campestris pv. vesicatoria).